The chain runs to 451 residues: GTPase Der (451 aa).

2 EngA-type G domains span residues 5–170 (PVVA…VAPP) and 186–359 (IKLA…AAAF). GTP-binding positions include 11-18 (GRPNVGKS), 58-62 (DTGGF), 122-125 (NKAE), 192-199 (GRPNVGKS), 239-243 (DTAGL), and 304-307 (NKWD). The KH-like domain occupies 360-444 (AKLSTPRLTR…PLRIEFKSSR (85 aa)).

This sequence belongs to the TRAFAC class TrmE-Era-EngA-EngB-Septin-like GTPase superfamily. EngA (Der) GTPase family. As to quaternary structure, associates with the 50S ribosomal subunit.

Functionally, GTPase that plays an essential role in the late steps of ribosome biogenesis. The polypeptide is GTPase Der (Bordetella bronchiseptica (strain ATCC BAA-588 / NCTC 13252 / RB50) (Alcaligenes bronchisepticus)).